Here is a 77-residue protein sequence, read N- to C-terminus: Acyl carrier protein (77 aa).

Residues 1 to 76 enclose the Carrier domain; that stretch reads MSLEDDVKSI…DVITYIKTRQ (76 aa). An O-(pantetheine 4'-phosphoryl)serine modification is found at serine 36.

Belongs to the acyl carrier protein (ACP) family. In terms of processing, 4'-phosphopantetheine is transferred from CoA to a specific serine of apo-ACP by AcpS. This modification is essential for activity because fatty acids are bound in thioester linkage to the sulfhydryl of the prosthetic group.

It localises to the cytoplasm. The protein operates within lipid metabolism; fatty acid biosynthesis. Carrier of the growing fatty acid chain in fatty acid biosynthesis. This Chlamydia caviae (strain ATCC VR-813 / DSM 19441 / 03DC25 / GPIC) (Chlamydophila caviae) protein is Acyl carrier protein.